Here is a 398-residue protein sequence, read N- to C-terminus: Large ribosomal subunit protein uL3 (398 aa).

Over residues 1–10 (MSHRKFEAPR) the composition is skewed to basic and acidic residues. Residues 1–34 (MSHRKFEAPRHGNLGFRPRKRAARHQGKVKSFPK) are disordered. The span at 17–28 (RPRKRAARHQGK) shows a compositional bias: basic residues.

Belongs to the universal ribosomal protein uL3 family.

Its subcellular location is the cytoplasm. Functionally, the L3 protein is a component of the large subunit of cytoplasmic ribosomes. This is Large ribosomal subunit protein uL3 (rpl3) from Dictyostelium discoideum (Social amoeba).